The sequence spans 629 residues: Chaperone protein DnaK (629 aa).

Over residues 576 to 587 (QAYQQQQDAQAG) the composition is skewed to low complexity. The tract at residues 576–629 (QAYQQQQDAQAGAAGGAGGMGGMGGMADGPGGAADADGDDEEYVDADFEDVDEE) is disordered. Gly residues predominate over residues 588–607 (AAGGAGGMGGMGGMADGPGG). Over residues 611–629 (ADGDDEEYVDADFEDVDEE) the composition is skewed to acidic residues.

The protein belongs to the heat shock protein 70 family.

In terms of biological role, acts as a chaperone. The protein is Chaperone protein DnaK of Halobacterium salinarum (strain ATCC 29341 / DSM 671 / R1).